A 412-amino-acid chain; its full sequence is Gamma-glutamyl phosphate reductase (412 aa).

It belongs to the gamma-glutamyl phosphate reductase family.

It is found in the cytoplasm. The enzyme catalyses L-glutamate 5-semialdehyde + phosphate + NADP(+) = L-glutamyl 5-phosphate + NADPH + H(+). It participates in amino-acid biosynthesis; L-proline biosynthesis; L-glutamate 5-semialdehyde from L-glutamate: step 2/2. Catalyzes the NADPH-dependent reduction of L-glutamate 5-phosphate into L-glutamate 5-semialdehyde and phosphate. The product spontaneously undergoes cyclization to form 1-pyrroline-5-carboxylate. The sequence is that of Gamma-glutamyl phosphate reductase from Bartonella bacilliformis (strain ATCC 35685 / KC583 / Herrer 020/F12,63).